The primary structure comprises 395 residues: Chaperone protein DnaJ (395 aa).

The J domain maps to 5 to 70 (DFYEVLGVDK…NKRAAYDRMG (66 aa)). Residues 145 to 223 (GKDETIKVPT…CDGVGRVRKT (79 aa)) form a CR-type zinc finger. Zn(2+) contacts are provided by C158, C161, C175, C178, C197, C200, C211, and C214. CXXCXGXG motif repeat units follow at residues 158–165 (CERCDGQG), 175–182 (CGTCQGAG), 197–204 (CPQCGGRG), and 211–218 (CNDCDGVG).

The protein belongs to the DnaJ family. Homodimer. It depends on Zn(2+) as a cofactor.

Its subcellular location is the cytoplasm. Functionally, participates actively in the response to hyperosmotic and heat shock by preventing the aggregation of stress-denatured proteins and by disaggregating proteins, also in an autonomous, DnaK-independent fashion. Unfolded proteins bind initially to DnaJ; upon interaction with the DnaJ-bound protein, DnaK hydrolyzes its bound ATP, resulting in the formation of a stable complex. GrpE releases ADP from DnaK; ATP binding to DnaK triggers the release of the substrate protein, thus completing the reaction cycle. Several rounds of ATP-dependent interactions between DnaJ, DnaK and GrpE are required for fully efficient folding. Also involved, together with DnaK and GrpE, in the DNA replication of plasmids through activation of initiation proteins. In Maricaulis maris (strain MCS10) (Caulobacter maris), this protein is Chaperone protein DnaJ.